The chain runs to 549 residues: 4-hydroxybutyrate--CoA ligase 2 (549 aa).

Residues 195 to 203 (TSGTTGLPK), 336 to 341 (ETYGPH), Asp-425, and Arg-440 each bind ATP. CoA-binding positions include 448–450 (GGE), Lys-506, and 514–516 (CPK). ATP is bound at residue Lys-530.

Belongs to the ATP-dependent AMP-binding enzyme family. The cofactor is Mg(2+). Mn(2+) is required as a cofactor.

The catalysed reaction is 4-hydroxybutanoate + ATP + CoA = 4-hydroxybutanoyl-CoA + AMP + diphosphate. The enzyme catalyses acetate + ATP + CoA = acetyl-CoA + AMP + diphosphate. It carries out the reaction propanoate + ATP + CoA = propanoyl-CoA + AMP + diphosphate. It catalyses the reaction a medium-chain fatty acid + ATP + CoA = a medium-chain fatty acyl-CoA + AMP + diphosphate. Catalyzes the ligation of coenzyme A (CoA) to 4-hydroxybutyrate (4HB). It can also use butyrate, valerate, propionate, acetate and 3-hydroxybutyrate (3HB) as substrates. This Metallosphaera sedula (strain ATCC 51363 / DSM 5348 / JCM 9185 / NBRC 15509 / TH2) protein is 4-hydroxybutyrate--CoA ligase 2.